The following is a 381-amino-acid chain: tRNA (guanine(26)-N(2))-dimethyltransferase (381 aa).

Residues 7–378 form the Trm1 methyltransferase domain; that stretch reads IEVQEGKAKI…APYEVFIETI (372 aa). R39, R64, D81, D123, and A124 together coordinate S-adenosyl-L-methionine.

The protein belongs to the class I-like SAM-binding methyltransferase superfamily. Trm1 family.

The enzyme catalyses guanosine(26) in tRNA + 2 S-adenosyl-L-methionine = N(2)-dimethylguanosine(26) in tRNA + 2 S-adenosyl-L-homocysteine + 2 H(+). Functionally, dimethylates a single guanine residue at position 26 of a number of tRNAs using S-adenosyl-L-methionine as donor of the methyl groups. The protein is tRNA (guanine(26)-N(2))-dimethyltransferase of Pyrococcus horikoshii (strain ATCC 700860 / DSM 12428 / JCM 9974 / NBRC 100139 / OT-3).